Consider the following 199-residue polypeptide: FMN-dependent NADH:quinone oxidoreductase 4 (199 aa).

FMN contacts are provided by residues Ser-10, 95 to 98 (MYNL), and 139 to 142 (SRGG).

This sequence belongs to the azoreductase type 1 family. Homodimer. Requires FMN as cofactor.

The enzyme catalyses 2 a quinone + NADH + H(+) = 2 a 1,4-benzosemiquinone + NAD(+). It catalyses the reaction N,N-dimethyl-1,4-phenylenediamine + anthranilate + 2 NAD(+) = 2-(4-dimethylaminophenyl)diazenylbenzoate + 2 NADH + 2 H(+). Quinone reductase that provides resistance to thiol-specific stress caused by electrophilic quinones. Functionally, also exhibits azoreductase activity. Catalyzes the reductive cleavage of the azo bond in aromatic azo compounds to the corresponding amines. The protein is FMN-dependent NADH:quinone oxidoreductase 4 of Burkholderia lata (strain ATCC 17760 / DSM 23089 / LMG 22485 / NCIMB 9086 / R18194 / 383).